The primary structure comprises 393 residues: MFRYLTAGESHGPQLTAIIEGIPAGLKLSEESINVDLARRQGGYGRGGRMAIEKDQVEILSGVRWGKTIGSPITLCVKNRDWTNWQEKMSPQERFRDDNIHVTRSRPGHADLPGAMKYDHKDVRNILERSSARETAVRVAVGSVAKALLQHFEIYLCGYVAELGGIKAKRPELCPAELRATIAKSELYTCDSAVEGEMKKLIDEVKAAGDTVGGVVEVIASGVPAGLGSHVQWDRKLDARIAMAMMSIQAFKGVEIGLGFEAAARKGSNVHDEIFYDQSRASQGSMTGYYRLTNNAGGIEGGITNGEDILVRAAMKPIPTLYKPLRSVDIVSKEPFEATVERSDVCAVPAASVVAESVLAIELADAFMVKFGGDSIEEMQRNYAGYLEYLKNF.

2 residues coordinate NADP(+): R40 and R46. FMN-binding positions include 129-131 (RSS), 249-250 (QA), G301, 316-320 (KPIPT), and R342.

It belongs to the chorismate synthase family. As to quaternary structure, homotetramer. The cofactor is FMNH2.

It carries out the reaction 5-O-(1-carboxyvinyl)-3-phosphoshikimate = chorismate + phosphate. Its pathway is metabolic intermediate biosynthesis; chorismate biosynthesis; chorismate from D-erythrose 4-phosphate and phosphoenolpyruvate: step 7/7. Functionally, catalyzes the anti-1,4-elimination of the C-3 phosphate and the C-6 proR hydrogen from 5-enolpyruvylshikimate-3-phosphate (EPSP) to yield chorismate, which is the branch point compound that serves as the starting substrate for the three terminal pathways of aromatic amino acid biosynthesis. This reaction introduces a second double bond into the aromatic ring system. This is Chorismate synthase from Geotalea daltonii (strain DSM 22248 / JCM 15807 / FRC-32) (Geobacter daltonii).